We begin with the raw amino-acid sequence, 339 residues long: Leucine-rich repeat-containing protein 75A (339 aa).

The interval Met-1–Glu-25 is disordered. Low complexity predominate over residues Ala-11 to Gly-21. LRR repeat units lie at residues Val-203–Asp-216 and Leu-228–Leu-241. The segment at Leu-294–Thr-339 is disordered. At Ser-322 the chain carries Phosphoserine. Residue Thr-325 is modified to Phosphothreonine. Residues Gln-330–Thr-339 are compositionally biased toward polar residues.

It belongs to the LRRC75 family.

The polypeptide is Leucine-rich repeat-containing protein 75A (Lrrc75a) (Mus musculus (Mouse)).